The sequence spans 328 residues: Tetraacyldisaccharide 4'-kinase (328 aa).

55–62 (TAGGNGKT) contributes to the ATP binding site.

The protein belongs to the LpxK family.

It catalyses the reaction a lipid A disaccharide + ATP = a lipid IVA + ADP + H(+). It participates in glycolipid biosynthesis; lipid IV(A) biosynthesis; lipid IV(A) from (3R)-3-hydroxytetradecanoyl-[acyl-carrier-protein] and UDP-N-acetyl-alpha-D-glucosamine: step 6/6. Transfers the gamma-phosphate of ATP to the 4'-position of a tetraacyldisaccharide 1-phosphate intermediate (termed DS-1-P) to form tetraacyldisaccharide 1,4'-bis-phosphate (lipid IVA). This Escherichia coli O139:H28 (strain E24377A / ETEC) protein is Tetraacyldisaccharide 4'-kinase.